The primary structure comprises 689 residues: MSEKTFLVEIGTEELPPKALRSLAESFAANFTAELDNAGLAHGTVQWFAAPRRLALKVANLAEAQPDREIEKRGPAIAQAFDAEGKPSKAAEGWARGCGITVDQAERLTTDKGEWLLYRAHVKGESTEALLPNMVATSLAKLPIPKLMRWGASDVHFVRPVHTVTLLLGDKVIPATILGIQSDRVIRGHRFMGEPEFTIDNADQYPEILRERGKVIADYEERKAKIKADAEEAARKIGGNADLSESLLEEVASLVEWPVVLTAKFEEKFLAVPAEALVYTMKGDQKYFPVYANDGKLLPNFIFVANIESKDPQQIISGNEKVVRPRLADAEFFFNTDRKKRLEDNLPRLQTVLFQQQLGTLRDKTDRIQALAGWIAEQIGADVNHATRAGLLSKCDLMTNMVFEFTDTQGVMGMHYARHDGEAEDVAVALNEQYQPRFAGDDLPSNPVACALAIADKMDTLAGIFGIGQHPKGDKDPFALRRAALGVLRIIVEKNLNLDLQTLTEEAVRLYGDKLTNANVVDDVIDFMLGRFRAWYQDEGYTVDTIQAVLARRPTRPADFDARMKAVSHFRTLDAAAALAAANKRVSNILAKSDEVLSDRVNASTLKEPEEIKLAMQVVVLRDKLEPYFTEGRYQDALVELAELREPVDAFFDKVMVMVDDKELRINRLTMLEKLRELFLRVADISLLQ.

The protein belongs to the class-II aminoacyl-tRNA synthetase family. In terms of assembly, tetramer of two alpha and two beta subunits.

The protein localises to the cytoplasm. It catalyses the reaction tRNA(Gly) + glycine + ATP = glycyl-tRNA(Gly) + AMP + diphosphate. The polypeptide is Glycine--tRNA ligase beta subunit (Escherichia coli (strain K12 / MC4100 / BW2952)).